A 256-amino-acid chain; its full sequence is DNA repair protein RecO (256 aa).

It belongs to the RecO family.

In terms of biological role, involved in DNA repair and RecF pathway recombination. The polypeptide is DNA repair protein RecO (Nocardia farcinica (strain IFM 10152)).